Here is a 389-residue protein sequence, read N- to C-terminus: Succinate--CoA ligase [ADP-forming] subunit beta (389 aa).

An ATP-grasp domain is found at 9 to 244; the sequence is KEILRKYNVP…LDEEDANEIE (236 aa). ATP contacts are provided by residues Lys-46, 53–55, Glu-99, Ala-102, and Glu-107; that span reads GRG. The Mg(2+) site is built by Asn-199 and Asp-213. Substrate is bound by residues Asn-264 and 321–323; that span reads GIM.

The protein belongs to the succinate/malate CoA ligase beta subunit family. As to quaternary structure, heterotetramer of two alpha and two beta subunits. It depends on Mg(2+) as a cofactor.

It carries out the reaction succinate + ATP + CoA = succinyl-CoA + ADP + phosphate. It catalyses the reaction GTP + succinate + CoA = succinyl-CoA + GDP + phosphate. Its pathway is carbohydrate metabolism; tricarboxylic acid cycle; succinate from succinyl-CoA (ligase route): step 1/1. Functionally, succinyl-CoA synthetase functions in the citric acid cycle (TCA), coupling the hydrolysis of succinyl-CoA to the synthesis of either ATP or GTP and thus represents the only step of substrate-level phosphorylation in the TCA. The beta subunit provides nucleotide specificity of the enzyme and binds the substrate succinate, while the binding sites for coenzyme A and phosphate are found in the alpha subunit. The protein is Succinate--CoA ligase [ADP-forming] subunit beta of Cupriavidus pinatubonensis (strain JMP 134 / LMG 1197) (Cupriavidus necator (strain JMP 134)).